The chain runs to 83 residues: MAGETNEDVKAMSFEQALDALEKIVDDLERGDVPLDQSIRIYERGEALKAHCDRLLKAAEDKVEKIRLSRDGKPVGTEPLDAD.

Belongs to the XseB family. Heterooligomer composed of large and small subunits.

Its subcellular location is the cytoplasm. The catalysed reaction is Exonucleolytic cleavage in either 5'- to 3'- or 3'- to 5'-direction to yield nucleoside 5'-phosphates.. Its function is as follows. Bidirectionally degrades single-stranded DNA into large acid-insoluble oligonucleotides, which are then degraded further into small acid-soluble oligonucleotides. The chain is Exodeoxyribonuclease 7 small subunit from Mesorhizobium japonicum (strain LMG 29417 / CECT 9101 / MAFF 303099) (Mesorhizobium loti (strain MAFF 303099)).